The chain runs to 124 residues: Large ribosomal subunit protein bL19 (124 aa).

Belongs to the bacterial ribosomal protein bL19 family.

In terms of biological role, this protein is located at the 30S-50S ribosomal subunit interface and may play a role in the structure and function of the aminoacyl-tRNA binding site. The protein is Large ribosomal subunit protein bL19 of Acidiphilium cryptum (strain JF-5).